The following is a 333-amino-acid chain: CRISPR-associated endonuclease Cas1 (333 aa).

Mn(2+)-binding residues include Glu162, His226, and Glu241.

It belongs to the CRISPR-associated endonuclease Cas1 family. In terms of assembly, homodimer, forms a heterotetramer with a Cas2 homodimer. Mg(2+) is required as a cofactor. Mn(2+) serves as cofactor.

In terms of biological role, CRISPR (clustered regularly interspaced short palindromic repeat), is an adaptive immune system that provides protection against mobile genetic elements (viruses, transposable elements and conjugative plasmids). CRISPR clusters contain spacers, sequences complementary to antecedent mobile elements, and target invading nucleic acids. CRISPR clusters are transcribed and processed into CRISPR RNA (crRNA). Acts as a dsDNA endonuclease. Involved in the integration of spacer DNA into the CRISPR cassette. The protein is CRISPR-associated endonuclease Cas1 of Nanoarchaeum equitans (strain Kin4-M).